Reading from the N-terminus, the 261-residue chain is Putative hydro-lyase Nther_1142 (261 aa).

Belongs to the D-glutamate cyclase family.

The sequence is that of Putative hydro-lyase Nther_1142 from Natranaerobius thermophilus (strain ATCC BAA-1301 / DSM 18059 / JW/NM-WN-LF).